A 463-amino-acid chain; its full sequence is L-seryl-tRNA(Sec) selenium transferase (463 aa).

K295 bears the N6-(pyridoxal phosphate)lysine mark.

It belongs to the SelA family. Homodecamer; pentamer of dimers. Binds only one seryl-tRNA(Sec) per dimer. The cofactor is pyridoxal 5'-phosphate.

It localises to the cytoplasm. The catalysed reaction is L-seryl-tRNA(Sec) + selenophosphate + H(+) = L-selenocysteinyl-tRNA(Sec) + phosphate. It functions in the pathway aminoacyl-tRNA biosynthesis; selenocysteinyl-tRNA(Sec) biosynthesis; selenocysteinyl-tRNA(Sec) from L-seryl-tRNA(Sec) (bacterial route): step 1/1. Its function is as follows. Converts seryl-tRNA(Sec) to selenocysteinyl-tRNA(Sec) required for selenoprotein biosynthesis. This Escherichia coli (strain K12 / MC4100 / BW2952) protein is L-seryl-tRNA(Sec) selenium transferase.